Here is a 117-residue protein sequence, read N- to C-terminus: MMAEAKKAAPKKAATAASKDADAKGPKHTPPNPKVRGRRKTRIGYVVSDKMQKTIVVELEDRVKHPLYGKIIRTTKKVKAHDENSIAGIGDRVSLMETRPTSATKRWRLVEILEKAK.

Residues M1–R42 form a disordered region.

Belongs to the universal ribosomal protein uS17 family. Part of the 30S ribosomal subunit.

Functionally, one of the primary rRNA binding proteins, it binds specifically to the 5'-end of 16S ribosomal RNA. The protein is Small ribosomal subunit protein uS17 of Mycolicibacterium paratuberculosis (strain ATCC BAA-968 / K-10) (Mycobacterium paratuberculosis).